A 122-amino-acid chain; its full sequence is UPF0102 protein CPF_1959 (122 aa).

This sequence belongs to the UPF0102 family.

The protein is UPF0102 protein CPF_1959 of Clostridium perfringens (strain ATCC 13124 / DSM 756 / JCM 1290 / NCIMB 6125 / NCTC 8237 / Type A).